The chain runs to 296 residues: Formamidopyrimidine-DNA glycosylase (296 aa).

Pro-2 functions as the Schiff-base intermediate with DNA in the catalytic mechanism. Glu-3 (proton donor) is an active-site residue. Catalysis depends on Lys-61, which acts as the Proton donor; for beta-elimination activity. DNA is bound by residues His-104, Arg-128, and Lys-174. The segment at His-260–Leu-294 adopts an FPG-type zinc-finger fold. Residue Arg-284 is the Proton donor; for delta-elimination activity of the active site.

The protein belongs to the FPG family. As to quaternary structure, monomer. Requires Zn(2+) as cofactor.

It catalyses the reaction Hydrolysis of DNA containing ring-opened 7-methylguanine residues, releasing 2,6-diamino-4-hydroxy-5-(N-methyl)formamidopyrimidine.. The catalysed reaction is 2'-deoxyribonucleotide-(2'-deoxyribose 5'-phosphate)-2'-deoxyribonucleotide-DNA = a 3'-end 2'-deoxyribonucleotide-(2,3-dehydro-2,3-deoxyribose 5'-phosphate)-DNA + a 5'-end 5'-phospho-2'-deoxyribonucleoside-DNA + H(+). Involved in base excision repair of DNA damaged by oxidation or by mutagenic agents. Acts as a DNA glycosylase that recognizes and removes damaged bases. Has a preference for oxidized purines, such as 7,8-dihydro-8-oxoguanine (8-oxoG). Has AP (apurinic/apyrimidinic) lyase activity and introduces nicks in the DNA strand. Cleaves the DNA backbone by beta-delta elimination to generate a single-strand break at the site of the removed base with both 3'- and 5'-phosphates. This is Formamidopyrimidine-DNA glycosylase from Corynebacterium diphtheriae (strain ATCC 700971 / NCTC 13129 / Biotype gravis).